The chain runs to 294 residues: Formamidopyrimidine-DNA glycosylase (294 aa).

The Schiff-base intermediate with DNA role is filled by P2. E3 serves as the catalytic Proton donor. Catalysis depends on K58, which acts as the Proton donor; for beta-elimination activity. 3 residues coordinate DNA: H105, R124, and K167. An FPG-type zinc finger spans residues 258-294 (QVYDREGEPCRTRGCKGTVKRFTQNGRSTFWCPSCQK). The active-site Proton donor; for delta-elimination activity is R284.

It belongs to the FPG family. In terms of assembly, monomer. It depends on Zn(2+) as a cofactor.

The enzyme catalyses Hydrolysis of DNA containing ring-opened 7-methylguanine residues, releasing 2,6-diamino-4-hydroxy-5-(N-methyl)formamidopyrimidine.. The catalysed reaction is 2'-deoxyribonucleotide-(2'-deoxyribose 5'-phosphate)-2'-deoxyribonucleotide-DNA = a 3'-end 2'-deoxyribonucleotide-(2,3-dehydro-2,3-deoxyribose 5'-phosphate)-DNA + a 5'-end 5'-phospho-2'-deoxyribonucleoside-DNA + H(+). Functionally, involved in base excision repair of DNA damaged by oxidation or by mutagenic agents. Acts as a DNA glycosylase that recognizes and removes damaged bases. Has a preference for oxidized purines, such as 7,8-dihydro-8-oxoguanine (8-oxoG). Has AP (apurinic/apyrimidinic) lyase activity and introduces nicks in the DNA strand. Cleaves the DNA backbone by beta-delta elimination to generate a single-strand break at the site of the removed base with both 3'- and 5'-phosphates. In Afipia carboxidovorans (strain ATCC 49405 / DSM 1227 / KCTC 32145 / OM5) (Oligotropha carboxidovorans), this protein is Formamidopyrimidine-DNA glycosylase.